A 396-amino-acid polypeptide reads, in one-letter code: Probable 20S rRNA accumulation protein 4 (396 aa).

This sequence belongs to the TSR4 family.

Its subcellular location is the cytoplasm. The protein localises to the nucleus. It localises to the nucleolus. Its function is as follows. Required for processing of the 20S pre-rRNA at site D to generate mature 18S rRNA. In Schizosaccharomyces pombe (strain 972 / ATCC 24843) (Fission yeast), this protein is Probable 20S rRNA accumulation protein 4.